A 432-amino-acid chain; its full sequence is Glutamyl-tRNA reductase (432 aa).

Residues 49 to 52 (TCNR), S109, 114 to 116 (EGQ), and Q120 each bind substrate. C50 (nucleophile) is an active-site residue. 198–203 (GAGRMS) contributes to the NADP(+) binding site.

It belongs to the glutamyl-tRNA reductase family. As to quaternary structure, homodimer.

The enzyme catalyses (S)-4-amino-5-oxopentanoate + tRNA(Glu) + NADP(+) = L-glutamyl-tRNA(Glu) + NADPH + H(+). Its pathway is porphyrin-containing compound metabolism; protoporphyrin-IX biosynthesis; 5-aminolevulinate from L-glutamyl-tRNA(Glu): step 1/2. The protein operates within porphyrin-containing compound metabolism; chlorophyll biosynthesis. Its function is as follows. Catalyzes the NADPH-dependent reduction of glutamyl-tRNA(Glu) to glutamate 1-semialdehyde (GSA). The chain is Glutamyl-tRNA reductase from Parasynechococcus marenigrum (strain WH8102).